We begin with the raw amino-acid sequence, 466 residues long: 3-isopropylmalate dehydratase large subunit (466 aa).

Residues Cys-347, Cys-407, and Cys-410 each contribute to the [4Fe-4S] cluster site.

The protein belongs to the aconitase/IPM isomerase family. LeuC type 1 subfamily. As to quaternary structure, heterodimer of LeuC and LeuD. Requires [4Fe-4S] cluster as cofactor.

The catalysed reaction is (2R,3S)-3-isopropylmalate = (2S)-2-isopropylmalate. Its pathway is amino-acid biosynthesis; L-leucine biosynthesis; L-leucine from 3-methyl-2-oxobutanoate: step 2/4. Its function is as follows. Catalyzes the isomerization between 2-isopropylmalate and 3-isopropylmalate, via the formation of 2-isopropylmaleate. The protein is 3-isopropylmalate dehydratase large subunit of Acidiphilium cryptum (strain JF-5).